Consider the following 156-residue polypeptide: Small ribosomal subunit protein uS7 (156 aa).

This sequence belongs to the universal ribosomal protein uS7 family. Part of the 30S ribosomal subunit. Contacts proteins S9 and S11.

Functionally, one of the primary rRNA binding proteins, it binds directly to 16S rRNA where it nucleates assembly of the head domain of the 30S subunit. Is located at the subunit interface close to the decoding center, probably blocks exit of the E-site tRNA. This chain is Small ribosomal subunit protein uS7, found in Lacticaseibacillus casei (strain BL23) (Lactobacillus casei).